The chain runs to 127 residues: Fluoride-specific ion channel FluC (127 aa).

Transmembrane regions (helical) follow at residues 4 to 24 (LLLAVFIGGGTGSVARWFLSM), 35 to 55 (LGTLTANLIGAFIIGVGLAWF), 71 to 91 (TGFCGGLTTFSTFSAEVVFLL), and 103 to 123 (IAVNMLGSFAMTALAFWLFSA). Na(+)-binding residues include glycine 75 and threonine 78.

The protein belongs to the fluoride channel Fluc/FEX (TC 1.A.43) family.

It localises to the cell inner membrane. The enzyme catalyses fluoride(in) = fluoride(out). Na(+) is not transported, but it plays an essential structural role and its presence is essential for fluoride channel function. Fluoride-specific ion channel. Important for reducing fluoride concentration in the cell, thus reducing its toxicity. This chain is Fluoride-specific ion channel FluC, found in Enterobacter sp. (strain 638).